Consider the following 362-residue polypeptide: MNDYTQQLQGKKDYLKTLFAGLDVPEWEVYESPDKHYRMRAEFRIWHEGGEMFYAMFEKGQKASGASLIRCDRFDAASEAVNCLMPELIAVAAQSAELRNHWYAVEFLSTLSGEMLVTMIYHKRLDDEWMKAAQALQQQLDISVIGRSRGQKIVLKQDYVTETLRVGDRDFHYRQIEGSFTQPNAAVCRKMLEWACRAAEGLGGDLLELYCGNGNFTLPLSRYFRQVLATEISKTSVSAAQWNIEANWIGNIKIARLSAEEFTEAYTGKREFTRLKESGIVLTDYAFSTIFVDPPRAGIDEETLKLVSQFDNIIYISCNPETLRANLDTLTETHTVGRAALFDQFPFTHHIESGVLLKKKIL.

Glutamine 182, tyrosine 210, asparagine 215, glutamate 231, and aspartate 293 together coordinate S-adenosyl-L-methionine. Cysteine 318 serves as the catalytic Nucleophile. Catalysis depends on glutamate 352, which acts as the Proton acceptor.

The protein belongs to the class I-like SAM-binding methyltransferase superfamily. RNA M5U methyltransferase family. TrmA subfamily.

It carries out the reaction uridine(54) in tRNA + S-adenosyl-L-methionine = 5-methyluridine(54) in tRNA + S-adenosyl-L-homocysteine + H(+). The catalysed reaction is uridine(341) in tmRNA + S-adenosyl-L-methionine = 5-methyluridine(341) in tmRNA + S-adenosyl-L-homocysteine + H(+). Functionally, dual-specificity methyltransferase that catalyzes the formation of 5-methyluridine at position 54 (m5U54) in all tRNAs, and that of position 341 (m5U341) in tmRNA (transfer-mRNA). The polypeptide is tRNA/tmRNA (uracil-C(5))-methyltransferase (Neisseria gonorrhoeae (strain ATCC 700825 / FA 1090)).